The chain runs to 551 residues: CTP synthase (551 aa).

An amidoligase domain region spans residues 1 to 267 (MSGTKYIFVT…DALVLEKLGL (267 aa)). CTP is bound at residue Ser-15. Ser-15 contacts UTP. Position 16 to 21 (16 to 21 (SIGKGT)) interacts with ATP. Residue Tyr-56 participates in L-glutamine binding. Asp-73 is a binding site for ATP. 2 residues coordinate Mg(2+): Asp-73 and Glu-141. Residues 148–150 (DIE), 188–193 (KTKPTQ), and Lys-224 each bind CTP. UTP-binding positions include 188–193 (KTKPTQ) and Lys-224. The Glutamine amidotransferase type-1 domain maps to 292-534 (RVAVIGKYIR…VGACLGAAEE (243 aa)). Gly-355 contacts L-glutamine. The active-site Nucleophile; for glutamine hydrolysis is Cys-382. L-glutamine contacts are provided by residues 383 to 386 (LGMQ), Glu-406, and Arg-462. Residues His-507 and Glu-509 contribute to the active site.

It belongs to the CTP synthase family. In terms of assembly, homotetramer.

The enzyme catalyses UTP + L-glutamine + ATP + H2O = CTP + L-glutamate + ADP + phosphate + 2 H(+). It carries out the reaction L-glutamine + H2O = L-glutamate + NH4(+). It catalyses the reaction UTP + NH4(+) + ATP = CTP + ADP + phosphate + 2 H(+). It participates in pyrimidine metabolism; CTP biosynthesis via de novo pathway; CTP from UDP: step 2/2. With respect to regulation, allosterically activated by GTP, when glutamine is the substrate; GTP has no effect on the reaction when ammonia is the substrate. The allosteric effector GTP functions by stabilizing the protein conformation that binds the tetrahedral intermediate(s) formed during glutamine hydrolysis. Inhibited by the product CTP, via allosteric rather than competitive inhibition. Its function is as follows. Catalyzes the ATP-dependent amination of UTP to CTP with either L-glutamine or ammonia as the source of nitrogen. Regulates intracellular CTP levels through interactions with the four ribonucleotide triphosphates. This is CTP synthase from Rubrobacter xylanophilus (strain DSM 9941 / JCM 11954 / NBRC 16129 / PRD-1).